The chain runs to 146 residues: Meiotically up-regulated gene 151 protein (146 aa).

Residues 1–40 are disordered; sequence MSLVAYDSEEEEQTSLVNENNDIKGRSEEPHWKIPNSPKA. Over residues 21 to 32 the composition is skewed to basic and acidic residues; it reads NDIKGRSEEPHW.

The protein resides in the nucleus. In terms of biological role, has a role in meiosis. The chain is Meiotically up-regulated gene 151 protein (mug151) from Schizosaccharomyces pombe (strain 972 / ATCC 24843) (Fission yeast).